The chain runs to 238 residues: Ribosomal RNA small subunit methyltransferase G (238 aa).

Residues glycine 77, phenylalanine 82, 128–129, and arginine 146 each bind S-adenosyl-L-methionine; that span reads AE. Residues 216–238 are disordered; the sequence is KKRQTPKKYPRKPGTPNKEPLLK.

Belongs to the methyltransferase superfamily. RNA methyltransferase RsmG family.

It is found in the cytoplasm. Functionally, specifically methylates the N7 position of guanine in position 535 of 16S rRNA. The sequence is that of Ribosomal RNA small subunit methyltransferase G from Macrococcus caseolyticus (strain JCSC5402) (Macrococcoides caseolyticum).